We begin with the raw amino-acid sequence, 1447 residues long: Calcium-dependent secretion activator (1447 aa).

Residues 1–15 (MIDPSSSEEEGEDDA) show a composition bias toward acidic residues. Disordered regions lie at residues 1–35 (MIDPSSSEEEGEDDAVPNVSSKGRLTNTTKGTSAV) and 101–163 (DTGN…EEEE). Polar residues-rich tracts occupy residues 18–32 (NVSSKGRLTNTTKGT) and 111–126 (GIPSGISQETLNQSVG). Residues 127-144 (SSRANSLPRPLSPSPSLT) are compositionally biased toward low complexity. The segment covering 145 to 163 (SEKHETAEPHGKHEREEEE) has biased composition (basic and acidic residues). The region spanning 417–547 (SKYGLQKLKR…PLSSKSPEWH (131 aa)) is the C2 domain. Positions 573–683 (NMKHCGYLYA…WVMAMYRATG (111 aa)) constitute a PH domain. The 188-residue stretch at 970–1157 (VDMDRVLSEQ…DMIEQCIQRT (188 aa)) folds into the MHD1 domain. Residues 1386-1395 (REGEEEDNGD) show a composition bias toward acidic residues. Residues 1386–1406 (REGEEEDNGDESTSNIPRGLP) form a disordered region.

As to expression, restricted to the nervous system at all stages of development and highly localized at synapses (at protein level).

The protein localises to the cytoplasmic vesicle membrane. Its subcellular location is the synapse. Calcium-binding protein involved in exocytosis of vesicles filled with neurotransmitters and neuropeptides. May specifically mediate the Ca(2+)-dependent exocytosis of large dense-core vesicles (DCVs) and other dense-core vesicles. However, it probably also participates in small clear synaptic vesicles (SVs) exocytosis and it is unclear whether its function is related to Ca(2+) triggering. This chain is Calcium-dependent secretion activator, found in Drosophila melanogaster (Fruit fly).